Here is a 199-residue protein sequence, read N- to C-terminus: Recombination protein RecR (199 aa).

The segment at 57-72 (CQSCRTYTEETLCPIC) adopts a C4-type zinc-finger fold. The Toprim domain occupies 81–176 (STICVVETPA…MISRIAHGVP (96 aa)).

Belongs to the RecR family.

Its function is as follows. May play a role in DNA repair. It seems to be involved in an RecBC-independent recombinational process of DNA repair. It may act with RecF and RecO. This chain is Recombination protein RecR, found in Shewanella baltica (strain OS195).